Reading from the N-terminus, the 214-residue chain is Probable transaldolase (214 aa).

The active-site Schiff-base intermediate with substrate is Lys-83.

Belongs to the transaldolase family. Type 3B subfamily.

It is found in the cytoplasm. It catalyses the reaction D-sedoheptulose 7-phosphate + D-glyceraldehyde 3-phosphate = D-erythrose 4-phosphate + beta-D-fructose 6-phosphate. It functions in the pathway carbohydrate degradation; pentose phosphate pathway; D-glyceraldehyde 3-phosphate and beta-D-fructose 6-phosphate from D-ribose 5-phosphate and D-xylulose 5-phosphate (non-oxidative stage): step 2/3. Transaldolase is important for the balance of metabolites in the pentose-phosphate pathway. The sequence is that of Probable transaldolase from Streptococcus equi subsp. zooepidemicus (strain MGCS10565).